A 413-amino-acid chain; its full sequence is Cell division protein FtsZ 2 (413 aa).

GTP contacts are provided by residues Gly-130–Gly-132, Glu-169, Arg-173, and Asp-216.

The protein belongs to the FtsZ family. In terms of assembly, homodimer. Polymerizes to form a dynamic ring structure in a strictly GTP-dependent manner. Interacts directly with several other division proteins.

It is found in the cytoplasm. In terms of biological role, essential cell division protein that forms a contractile ring structure (Z ring) at the future cell division site. The regulation of the ring assembly controls the timing and the location of cell division. One of the functions of the FtsZ ring is to recruit other cell division proteins to the septum to produce a new cell wall between the dividing cells. Binds GTP and shows GTPase activity. In Pyrococcus abyssi (strain GE5 / Orsay), this protein is Cell division protein FtsZ 2.